A 992-amino-acid polypeptide reads, in one-letter code: UPF0182 protein RHA1_ro06389 (992 aa).

A run of 7 helical transmembrane segments spans residues 18–38 (VLLVLALVVAALLLVGPRLIS), 63–83 (LLLFLVVGVVVGGIVWLALLL), 114–134 (LFGLAIPIAVGLLAGLIAQSS), 174–194 (WLFVAVLLAFFASLVTHYIFG), 211–231 (VQLAVLAGTFILLKAVAYWFD), 260–280 (KLILLAIAVICAGAFFAAIFL), and 288–308 (MATALLVLSSILVGAVWPLVV). The tract at residues 904-948 (TGSVATAPSAEEGTPPETGTTPPVDQGAAPAPTAPATPPSGTDVS) is disordered. The segment covering 908–934 (ATAPSAEEGTPPETGTTPPVDQGAAPA) has biased composition (low complexity).

The protein belongs to the UPF0182 family.

The protein resides in the cell membrane. The sequence is that of UPF0182 protein RHA1_ro06389 from Rhodococcus jostii (strain RHA1).